The sequence spans 341 residues: MRLSDFDYDLPKELIAQKPVEPRDASRLMVVHRASGAIEHRCFRDLPEYLRPGDGLVINETRVMPARLLGSREQTGGAMEVLLLKRLDRDRWETLVKPGKKARPGERIVFGDGLLVGTVVGPTDYGGRVIDFHYEGVFENLLERLGQMPLPPYIHEQLEEPERYQTVYAREWGSAAAPTAGLHFTAELLDRLAARGVEIHRITLHVGLGTFRPVEVEDPTQHKMHSEFYHVSPEAAAGINAVRKGGGRLVAVGTTSVRTLETVADEDGTVRPGEGWTDIFIYPGYRFKAVDALVTNFHLPKSTLLMLVSALAGHDLIMRAYREAVAQRYRFFSFGDAMLIL.

This sequence belongs to the QueA family. In terms of assembly, monomer.

The protein localises to the cytoplasm. It catalyses the reaction 7-aminomethyl-7-carbaguanosine(34) in tRNA + S-adenosyl-L-methionine = epoxyqueuosine(34) in tRNA + adenine + L-methionine + 2 H(+). It participates in tRNA modification; tRNA-queuosine biosynthesis. In terms of biological role, transfers and isomerizes the ribose moiety from AdoMet to the 7-aminomethyl group of 7-deazaguanine (preQ1-tRNA) to give epoxyqueuosine (oQ-tRNA). The chain is S-adenosylmethionine:tRNA ribosyltransferase-isomerase from Symbiobacterium thermophilum (strain DSM 24528 / JCM 14929 / IAM 14863 / T).